We begin with the raw amino-acid sequence, 285 residues long: NADPH-dependent 7-cyano-7-deazaguanine reductase (285 aa).

Residue 91-93 (IES) coordinates substrate. An NADPH-binding site is contributed by 93–94 (SK). The active-site Thioimide intermediate is the C191. D198 serves as the catalytic Proton donor. 230–231 (HE) contacts substrate. Position 259–260 (259–260 (RG)) interacts with NADPH.

This sequence belongs to the GTP cyclohydrolase I family. QueF type 2 subfamily. In terms of assembly, homodimer.

It is found in the cytoplasm. It catalyses the reaction 7-aminomethyl-7-carbaguanine + 2 NADP(+) = 7-cyano-7-deazaguanine + 2 NADPH + 3 H(+). It functions in the pathway tRNA modification; tRNA-queuosine biosynthesis. Functionally, catalyzes the NADPH-dependent reduction of 7-cyano-7-deazaguanine (preQ0) to 7-aminomethyl-7-deazaguanine (preQ1). The polypeptide is NADPH-dependent 7-cyano-7-deazaguanine reductase (Legionella pneumophila (strain Lens)).